Here is a 98-residue protein sequence, read N- to C-terminus: NADH-ubiquinone oxidoreductase chain 4L (98 aa).

A run of 3 helical transmembrane segments spans residues 1–21 (MTLI…GLLM), 29–49 (ALLC…LTIL), and 61–81 (IILL…LVMV).

Belongs to the complex I subunit 4L family. In terms of assembly, core subunit of respiratory chain NADH dehydrogenase (Complex I) which is composed of 45 different subunits.

The protein localises to the mitochondrion inner membrane. It carries out the reaction a ubiquinone + NADH + 5 H(+)(in) = a ubiquinol + NAD(+) + 4 H(+)(out). Functionally, core subunit of the mitochondrial membrane respiratory chain NADH dehydrogenase (Complex I) which catalyzes electron transfer from NADH through the respiratory chain, using ubiquinone as an electron acceptor. Part of the enzyme membrane arm which is embedded in the lipid bilayer and involved in proton translocation. The sequence is that of NADH-ubiquinone oxidoreductase chain 4L (MT-ND4L) from Balaenoptera physalus (Fin whale).